A 510-amino-acid polypeptide reads, in one-letter code: Inositol-3-phosphate synthase isozyme 2 (510 aa).

The protein belongs to the myo-inositol 1-phosphate synthase family. Requires NAD(+) as cofactor. Expressed in siliques, leaves, roots, seed endosperm, but not in embryos. Highest expression in seeds. In leaves, only expressed in hydathodes and vascular tissue.

The protein localises to the cytoplasm. It catalyses the reaction D-glucose 6-phosphate = 1D-myo-inositol 3-phosphate. The protein operates within polyol metabolism; myo-inositol biosynthesis; myo-inositol from D-glucose 6-phosphate: step 1/2. In terms of biological role, key enzyme in myo-inositol biosynthesis pathway that catalyzes the conversion of glucose 6-phosphate to 1-myo-inositol 1-phosphate in a NAD-dependent manner. This Arabidopsis thaliana (Mouse-ear cress) protein is Inositol-3-phosphate synthase isozyme 2 (IPS2).